A 917-amino-acid polypeptide reads, in one-letter code: Isoleucine--tRNA ligase (917 aa).

Proline 56, histidine 67, glutamate 554, glycine 555, aspartate 557, glutamine 558, and histidine 585 together coordinate L-isoleucyl-5'-AMP. The short motif at 57 to 67 (PYANGNLHMGH) is the 'HIGH' region element. The 'KMSKS' region signature appears at 595-599 (KMSKS). Lysine 598 contributes to the ATP binding site. TRNA(Ile) is bound by residues arginine 632 and glutamine 640. Zn(2+) contacts are provided by cysteine 886, cysteine 889, cysteine 906, and cysteine 909.

It belongs to the class-I aminoacyl-tRNA synthetase family. IleS type 1 subfamily. As to quaternary structure, monomer. The cofactor is Zn(2+).

It localises to the cytoplasm. The catalysed reaction is tRNA(Ile) + L-isoleucine + ATP = L-isoleucyl-tRNA(Ile) + AMP + diphosphate. Catalyzes the attachment of isoleucine to tRNA(Ile). As IleRS can inadvertently accommodate and process structurally similar amino acids such as valine, to avoid such errors it has two additional distinct tRNA(Ile)-dependent editing activities. One activity is designated as 'pretransfer' editing and involves the hydrolysis of activated Val-AMP. The other activity is designated 'posttransfer' editing and involves deacylation of mischarged Val-tRNA(Ile). This chain is Isoleucine--tRNA ligase (ileS), found in Staphylococcus aureus.